Reading from the N-terminus, the 259-residue chain is uncharacterized protein (259 aa).

Residues 82 to 128 are a coiled coil; that stretch reads NSGMAETIEEKREDFQKEEKEDFTEEQNIEDLLAAVADAEGRYQTNQ. The tract at residues 192–259 is disordered; that stretch reads LIQTQNQHPR…SSSRNSSTTS (68 aa). The segment covering 228–240 has biased composition (basic residues); sequence KKVHARSRKRRKT. Low complexity predominate over residues 241 to 259; the sequence is SSSSSSSSSSSSRNSSTTS.

This is an uncharacterized protein from Homo sapiens (Human).